The chain runs to 513 residues: Histidine ammonia-lyase (513 aa).

Residues 142-144 constitute a cross-link (5-imidazolinone (Ala-Gly)); sequence ASG. 2,3-didehydroalanine (Ser) is present on Ser-143.

This sequence belongs to the PAL/histidase family. Post-translationally, contains an active site 4-methylidene-imidazol-5-one (MIO), which is formed autocatalytically by cyclization and dehydration of residues Ala-Ser-Gly.

The protein resides in the cytoplasm. The catalysed reaction is L-histidine = trans-urocanate + NH4(+). The protein operates within amino-acid degradation; L-histidine degradation into L-glutamate; N-formimidoyl-L-glutamate from L-histidine: step 1/3. This chain is Histidine ammonia-lyase, found in Roseobacter denitrificans (strain ATCC 33942 / OCh 114) (Erythrobacter sp. (strain OCh 114)).